A 670-amino-acid polypeptide reads, in one-letter code: ATP-dependent DNA helicase Rep (670 aa).

Residues 1–277 form the UvrD-like helicase ATP-binding domain; sequence MLFNEHQKKA…IIMQHNYRSS (277 aa). ATP contacts are provided by residues 22 to 29 and Arg275; that span reads AGAGSGKT. One can recognise a UvrD-like helicase C-terminal domain in the interval 278 to 562; sequence GRILKVANAL…QLMTLHASKG (285 aa).

This sequence belongs to the helicase family. UvrD subfamily. As to quaternary structure, homodimer.

The catalysed reaction is Couples ATP hydrolysis with the unwinding of duplex DNA by translocating in the 3'-5' direction.. It carries out the reaction ATP + H2O = ADP + phosphate + H(+). In terms of biological role, rep helicase is a single-stranded DNA-dependent ATPase involved in DNA replication; it can initiate unwinding at a nick in the DNA. It binds to the single-stranded DNA and acts in a progressive fashion along the DNA in the 3' to 5' direction. This is ATP-dependent DNA helicase Rep from Buchnera aphidicola subsp. Baizongia pistaciae (strain Bp).